Consider the following 482-residue polypeptide: MVESQKAMPQPKMGRIRRIHFVGIGGVGMCGIAEVLLNLGYEVSGSDLKASPVTERLESFGAEIFVGHRAENAATADVLVVSSAINPANPEVATALERRIPVVPRAEMLAELMRYRHGVAVAGTHGKTTTTSLLASVFAAGGLDPTFVIGGRLTAAGTNAQLGTSRYLIAEADESDASFLHLQPMVAVVTNIDADHMATYEGDFNKLKKTFVEFLHNLPFYGLAVMCLDDPVVREILPQVKRPTVTYGFSEEADIRAINVRQQGMQTHFTVLRRDCEPLEVSVNMPGNHNVLNALATIAIATDEGITDEAIIQGLSGFQGVGRRFQVYGELPVEGGSVMLVDDYGHHPTEVAAVIKAVRGGWPSRRLVIVYQPHRYSRTRDLYDDFVQVLGDANVLLLMEVYPAGEEPIPGADSRQLCHSIRQRGKLDPIYIERGAELAPLVKPLLRAGDILICQGAGDVGGLAPQLMKSPLFAGAKQEKSK.

123–129 lines the ATP pocket; it reads GTHGKTT.

It belongs to the MurCDEF family.

It localises to the cytoplasm. The catalysed reaction is UDP-N-acetyl-alpha-D-muramate + L-alanine + ATP = UDP-N-acetyl-alpha-D-muramoyl-L-alanine + ADP + phosphate + H(+). It participates in cell wall biogenesis; peptidoglycan biosynthesis. Cell wall formation. This Pseudomonas putida (strain GB-1) protein is UDP-N-acetylmuramate--L-alanine ligase.